A 323-amino-acid polypeptide reads, in one-letter code: Elongation factor P--(R)-beta-lysine ligase (323 aa).

76–78 contacts substrate; the sequence is SPE. Residues 100–102 and N109 each bind ATP; that span reads RNE. Position 118 (Y118) interacts with substrate. An ATP-binding site is contributed by 242-243; it reads EL. E249 is a substrate binding site. Position 298 (G298) interacts with ATP.

It belongs to the class-II aminoacyl-tRNA synthetase family. EpmA subfamily. Homodimer.

It carries out the reaction D-beta-lysine + L-lysyl-[protein] + ATP = N(6)-((3R)-3,6-diaminohexanoyl)-L-lysyl-[protein] + AMP + diphosphate + H(+). Its function is as follows. With EpmB is involved in the beta-lysylation step of the post-translational modification of translation elongation factor P (EF-P). Catalyzes the ATP-dependent activation of (R)-beta-lysine produced by EpmB, forming a lysyl-adenylate, from which the beta-lysyl moiety is then transferred to the epsilon-amino group of a conserved specific lysine residue in EF-P. This Mannheimia succiniciproducens (strain KCTC 0769BP / MBEL55E) protein is Elongation factor P--(R)-beta-lysine ligase.